The sequence spans 261 residues: Imidazole glycerol phosphate synthase subunit HisF (261 aa).

Catalysis depends on residues D11 and D130.

This sequence belongs to the HisA/HisF family. Heterodimer of HisH and HisF.

It localises to the cytoplasm. It carries out the reaction 5-[(5-phospho-1-deoxy-D-ribulos-1-ylimino)methylamino]-1-(5-phospho-beta-D-ribosyl)imidazole-4-carboxamide + L-glutamine = D-erythro-1-(imidazol-4-yl)glycerol 3-phosphate + 5-amino-1-(5-phospho-beta-D-ribosyl)imidazole-4-carboxamide + L-glutamate + H(+). The protein operates within amino-acid biosynthesis; L-histidine biosynthesis; L-histidine from 5-phospho-alpha-D-ribose 1-diphosphate: step 5/9. IGPS catalyzes the conversion of PRFAR and glutamine to IGP, AICAR and glutamate. The HisF subunit catalyzes the cyclization activity that produces IGP and AICAR from PRFAR using the ammonia provided by the HisH subunit. The chain is Imidazole glycerol phosphate synthase subunit HisF from Heliobacterium modesticaldum (strain ATCC 51547 / Ice1).